The following is a 455-amino-acid chain: MASKCLKASFSSGSLKSPGKAGGGSTRVSNMYSSSSCKLPSPSRGARSFSVCSAGLGRGNYRVSSCLPALCLPTGGFATSYGTGGGWFGEGILTGNEKETMQSLNDRLASYLEKVRQLEQENASLESRIREWCEQQVPYMCPDYQSYFRTMEELQKKTLCSKAENARLVVQIDNAKLAADDFRTKYETEVSLRQLVEADINGLRRILDDLTLCKADLEAQVESLKEELLCLKKNHEEEVNSLRCQLGDRLNVEVDAAPPVDLNRVLDEMRCQYETLVENNRRDAEDWYDTQTEELNQQVVSSSEQLQSCQSDIIELRRTVNSLEIELQAQQSMRDALDSTLAETEGRYSSQLAQMQCMIGNVESQLGEIRADLERQNQEYQVLLDVRARLECEINTYRGLLESEDSKLPCNPCAPDYSSSKSCLPCLPAVSCSTGAARTTCSPRPVCVPCPGGRF.

The segment at 1-97 (MASKCLKASF…FGEGILTGNE (97 aa)) is head. Positions 97–408 (EKETMQSLND…GLLESEDSKL (312 aa)) constitute an IF rod domain. Positions 98–132 (KETMQSLNDRLASYLEKVRQLEQENASLESRIREW) are coil 1A. The linker 1 stretch occupies residues 133–143 (CEQQVPYMCPD). The coil 1B stretch occupies residues 144-244 (YQSYFRTMEE…HEEEVNSLRC (101 aa)). A linker 12 region spans residues 245–260 (QLGDRLNVEVDAAPPV). The tract at residues 261-404 (DLNRVLDEMR…NTYRGLLESE (144 aa)) is coil 2. The tract at residues 405 to 455 (DSKLPCNPCAPDYSSSKSCLPCLPAVSCSTGAARTTCSPRPVCVPCPGGRF) is tail.

Belongs to the intermediate filament family.

The sequence is that of Keratin, type I cuticular Ha5 from Mus musculus (Mouse).